An 859-amino-acid polypeptide reads, in one-letter code: Protein EFR3 homolog (859 aa).

Disordered stretches follow at residues 638–657 (DDPL…TPRT) and 697–724 (RDGN…PDGY). The span at 704 to 722 (WQREDGQNFDSTDGRESPD) shows a compositional bias: basic and acidic residues.

It belongs to the EFR3 family.

This Caenorhabditis briggsae protein is Protein EFR3 homolog.